The following is a 967-amino-acid chain: Leucine--tRNA ligase (967 aa).

The 'HIGH' region motif lies at 43 to 53 (PYLSGHLHVGH). The short motif at 650–654 (KMSKS) is the 'KMSKS' region element. Lysine 653 contacts ATP.

It belongs to the class-I aminoacyl-tRNA synthetase family.

Its subcellular location is the cytoplasm. It carries out the reaction tRNA(Leu) + L-leucine + ATP = L-leucyl-tRNA(Leu) + AMP + diphosphate. In Pyrococcus abyssi (strain GE5 / Orsay), this protein is Leucine--tRNA ligase.